The chain runs to 113 residues: UPF0251 protein TK0562 (113 aa).

Belongs to the UPF0251 family.

This chain is UPF0251 protein TK0562, found in Thermococcus kodakarensis (strain ATCC BAA-918 / JCM 12380 / KOD1) (Pyrococcus kodakaraensis (strain KOD1)).